The following is a 174-amino-acid chain: uncharacterized protein (174 aa).

This is an uncharacterized protein from Acidianus convivator (ABV).